The primary structure comprises 308 residues: Dual oxidase maturation factor 1 (308 aa).

Residues 1 to 21 (MQANIFPFYPQPRTPFKFDTK) lie on the Extracellular side of the membrane. A helical membrane pass occupies residues 22 to 42 (IIEIIIICIVTACTFIIILPG). Over 43 to 49 (IRGKSRS) the chain is Cytoplasmic. The helical transmembrane segment at 50-70 (IWLLRILTSLFIGAVILAVNF) threads the bilayer. The Extracellular segment spans residues 71-91 (TSDWEMGTITATTVYKSFSHS). Residues 92–112 (MLNASIGLWIGLKGLNITLIG) form a helical membrane-spanning segment. Over 113 to 175 (NPEYQLNETI…GLFQQYCIST (63 aa)) the chain is Cytoplasmic. Residues 176–198 (YYSSGIMWIAFCSWILYNVLFSM) traverse the membrane as a helical segment. A topological domain (extracellular) is located at residue Pro-199. The helical transmembrane segment at 200-220 (VILYGIYMMFVTAICMLVSLI) threads the bilayer. Over 221–247 (SFASVRKAPVCNIQFGNSILKTHFGVS) the chain is Cytoplasmic. A helical transmembrane segment spans residues 248-268 (YWLSLITGLLCLIISLVLLFL). The Extracellular segment spans residues 269–308 (YKTQPKVLQLIFSYGEEEDLSNKSENEEEHSSVLSLNEIL). N-linked (GlcNAc...) asparagine glycosylation occurs at Asn-290.

It belongs to the DUOXA family.

Its subcellular location is the membrane. Possible role in maturation and transport from the endoplasmic reticulum to the plasma membrane of functional dual oxidase. The sequence is that of Dual oxidase maturation factor 1 (duoxa1) from Xenopus laevis (African clawed frog).